The following is a 208-amino-acid chain: Probable nicotinate-nucleotide adenylyltransferase (208 aa).

The protein belongs to the NadD family.

It catalyses the reaction nicotinate beta-D-ribonucleotide + ATP + H(+) = deamido-NAD(+) + diphosphate. The protein operates within cofactor biosynthesis; NAD(+) biosynthesis; deamido-NAD(+) from nicotinate D-ribonucleotide: step 1/1. Catalyzes the reversible adenylation of nicotinate mononucleotide (NaMN) to nicotinic acid adenine dinucleotide (NaAD). In Nostoc sp. (strain PCC 7120 / SAG 25.82 / UTEX 2576), this protein is Probable nicotinate-nucleotide adenylyltransferase.